The following is a 180-amino-acid chain: uncharacterized protein (180 aa).

The Nudix hydrolase domain occupies 35 to 163 (LRHRATYIVV…TPDSLKALAL (129 aa)). Positions 72–94 (GGVVQADEQLLESARREAEEELG) match the Nudix box motif. Positions 88 and 92 each coordinate Mg(2+).

The protein belongs to the Nudix hydrolase family. Mg(2+) serves as cofactor.

This is an uncharacterized protein from Shigella flexneri.